A 120-amino-acid chain; its full sequence is NAD(P)H-quinone oxidoreductase subunit 3 (120 aa).

A run of 3 helical transmembrane segments spans residues 2-22 (FVLS…LVPI), 64-84 (MFAL…PWAV), and 89-109 (LGLL…IALV).

This sequence belongs to the complex I subunit 3 family. In terms of assembly, NDH-1 can be composed of about 15 different subunits; different subcomplexes with different compositions have been identified which probably have different functions.

Its subcellular location is the cellular thylakoid membrane. The enzyme catalyses a plastoquinone + NADH + (n+1) H(+)(in) = a plastoquinol + NAD(+) + n H(+)(out). It catalyses the reaction a plastoquinone + NADPH + (n+1) H(+)(in) = a plastoquinol + NADP(+) + n H(+)(out). NDH-1 shuttles electrons from an unknown electron donor, via FMN and iron-sulfur (Fe-S) centers, to quinones in the respiratory and/or the photosynthetic chain. The immediate electron acceptor for the enzyme in this species is believed to be plastoquinone. Couples the redox reaction to proton translocation, and thus conserves the redox energy in a proton gradient. Cyanobacterial NDH-1 also plays a role in inorganic carbon-concentration. This Picosynechococcus sp. (strain ATCC 27264 / PCC 7002 / PR-6) (Agmenellum quadruplicatum) protein is NAD(P)H-quinone oxidoreductase subunit 3.